Reading from the N-terminus, the 162-residue chain is Ribonuclease H (162 aa).

The region spanning 6-154 (DMKRVEIFTD…ADRLANQGVE (149 aa)) is the RNase H type-1 domain. Mg(2+) contacts are provided by Asp-15, Glu-53, Asp-82, and Asp-146.

The protein belongs to the RNase H family. In terms of assembly, monomer. It depends on Mg(2+) as a cofactor.

The protein resides in the cytoplasm. It catalyses the reaction Endonucleolytic cleavage to 5'-phosphomonoester.. Endonuclease that specifically degrades the RNA of RNA-DNA hybrids. The sequence is that of Ribonuclease H from Nitrosomonas eutropha (strain DSM 101675 / C91 / Nm57).